The following is a 245-amino-acid chain: 1-(5-phosphoribosyl)-5-[(5-phosphoribosylamino)methylideneamino] imidazole-4-carboxamide isomerase (245 aa).

The Proton acceptor role is filled by aspartate 7. Aspartate 129 acts as the Proton donor in catalysis.

The protein belongs to the HisA/HisF family.

It localises to the cytoplasm. The catalysed reaction is 1-(5-phospho-beta-D-ribosyl)-5-[(5-phospho-beta-D-ribosylamino)methylideneamino]imidazole-4-carboxamide = 5-[(5-phospho-1-deoxy-D-ribulos-1-ylimino)methylamino]-1-(5-phospho-beta-D-ribosyl)imidazole-4-carboxamide. Its pathway is amino-acid biosynthesis; L-histidine biosynthesis; L-histidine from 5-phospho-alpha-D-ribose 1-diphosphate: step 4/9. The sequence is that of 1-(5-phosphoribosyl)-5-[(5-phosphoribosylamino)methylideneamino] imidazole-4-carboxamide isomerase from Shewanella piezotolerans (strain WP3 / JCM 13877).